Here is a 20-residue protein sequence, read N- to C-terminus: Brevinin-1SPb (20 aa).

An intrachain disulfide couples C14 to C20.

As to expression, expressed by the skin glands.

It localises to the secreted. Functionally, antimicrobial peptide with activity against Gram-negative and Gram-positive bacteria (MIC=50 uM against E.coli, MIC=6 uM against S.aureus) and fungi (MIC=13 uM against C.albicans). Shows hemolytic activity on human erythrocytes (HC(50)=25 uM). This Lithobates septentrionalis (Mink frog) protein is Brevinin-1SPb.